A 591-amino-acid polypeptide reads, in one-letter code: Phenylalanine--tRNA ligase beta subunit (591 aa).

A B5 domain is found at 304–380 (LSYREMTVTT…VAFGYNNLIT (77 aa)). Residues D358, D364, E367, and D368 each contribute to the Mg(2+) site.

The protein belongs to the phenylalanyl-tRNA synthetase beta subunit family. Type 2 subfamily. Tetramer of two alpha and two beta subunits. The cofactor is Mg(2+).

It localises to the cytoplasm. The catalysed reaction is tRNA(Phe) + L-phenylalanine + ATP = L-phenylalanyl-tRNA(Phe) + AMP + diphosphate + H(+). The chain is Phenylalanine--tRNA ligase beta subunit from Caenorhabditis elegans.